A 490-amino-acid chain; its full sequence is Transcriptional regulator FleQ (490 aa).

Leu-142 serves as a coordination point for 3',3'-c-di-GMP. Residues Val-147 and 177-182 contribute to the ADP site; that span reads GTGKEV. Residues 186–189 and 330–341 contribute to the 3',3'-c-di-GMP site; these read NLHY and ELISRMEHEKRG. Residues Arg-334 and Arg-363 each coordinate ADP.

Forms homodimers. Forms homohexamers that inhibit transcription initiation. Interacts with FleN; this complex is formed in the presence as well as in the absence of c-di-GMP or ATP.

C-di-GMP interaction leads to active site obstruction, hexameric ring destabilization thus relieving DNA bending and activating gene transcription. Its function is as follows. AAA+ ATPase enhancer-binding protein that acts as a transcription regulator and plays a role in the modulation of mucin adhesion and flagellar gene expression. In addition to flagella genes, also regulates expression of biofilm-related genes. Functions as a transcriptional repressor in the absence of c-di-GMP and as an activator when c-di-GMP is present. This Pseudomonas aeruginosa (strain ATCC 15692 / DSM 22644 / CIP 104116 / JCM 14847 / LMG 12228 / 1C / PRS 101 / PAO1) protein is Transcriptional regulator FleQ.